The following is a 350-amino-acid chain: Nicotinate-nucleotide--dimethylbenzimidazole phosphoribosyltransferase (350 aa).

The active-site Proton acceptor is the E317.

It belongs to the CobT family.

The catalysed reaction is 5,6-dimethylbenzimidazole + nicotinate beta-D-ribonucleotide = alpha-ribazole 5'-phosphate + nicotinate + H(+). The protein operates within nucleoside biosynthesis; alpha-ribazole biosynthesis; alpha-ribazole from 5,6-dimethylbenzimidazole: step 1/2. Its function is as follows. Catalyzes the synthesis of alpha-ribazole-5'-phosphate from nicotinate mononucleotide (NAMN) and 5,6-dimethylbenzimidazole (DMB). This is Nicotinate-nucleotide--dimethylbenzimidazole phosphoribosyltransferase from Shewanella sp. (strain ANA-3).